We begin with the raw amino-acid sequence, 317 residues long: RHOMBOID-like protein 2 (317 aa).

The next 7 helical transmembrane spans lie at 33-53 (SWLI…VMFV), 118-138 (WLHA…FIGI), 149-169 (VGLI…LFLQ), 172-192 (ISVG…SELL), 202-222 (AAAL…GMLP), 224-244 (VDNF…FVLL), and 272-292 (LFVV…VMLF). Ser177 serves as the catalytic Nucleophile. Catalysis depends on His229, which acts as the Charge relay system.

This sequence belongs to the peptidase S54 family. As to expression, expressed in roots, seedlings, leaves, stems and flowers.

Its subcellular location is the golgi apparatus membrane. The enzyme catalyses Cleaves type-1 transmembrane domains using a catalytic dyad composed of serine and histidine that are contributed by different transmembrane domains.. Functionally, rhomboid-type serine protease that catalyzes intramembrane proteolysis. Can cleave the Drosophila proteins Spitz and Keren. May function in pollen elongation. This is RHOMBOID-like protein 2 from Arabidopsis thaliana (Mouse-ear cress).